Reading from the N-terminus, the 327-residue chain is Phenylalanine--tRNA ligase alpha subunit (327 aa).

Mg(2+) is bound at residue E252.

Belongs to the class-II aminoacyl-tRNA synthetase family. Phe-tRNA synthetase alpha subunit type 1 subfamily. As to quaternary structure, tetramer of two alpha and two beta subunits. It depends on Mg(2+) as a cofactor.

The protein localises to the cytoplasm. The enzyme catalyses tRNA(Phe) + L-phenylalanine + ATP = L-phenylalanyl-tRNA(Phe) + AMP + diphosphate + H(+). The polypeptide is Phenylalanine--tRNA ligase alpha subunit (Shigella dysenteriae serotype 1 (strain Sd197)).